A 61-amino-acid polypeptide reads, in one-letter code: MDPKLLDILACPICKGPLKLTDDKSELICKADALAFPVRDGIPVMLESEARTLNVDERLDK.

It belongs to the UPF0434 family.

The sequence is that of UPF0434 protein Avin_14770 from Azotobacter vinelandii (strain DJ / ATCC BAA-1303).